A 431-amino-acid polypeptide reads, in one-letter code: O-Mevalon transferase macI (431 aa).

N-linked (GlcNAc...) asparagine glycosylation occurs at Asn-176. The next 4 membrane-spanning stretches (helical) occupy residues Ile-198–Met-218, Leu-301–Thr-321, Tyr-336–Ile-356, and Leu-404–Ala-424.

This sequence belongs to the wax synthase family.

The protein resides in the membrane. It participates in secondary metabolite biosynthesis; terpenoid biosynthesis. In terms of biological role, O-Mevalon transferase; part of the gene cluster that mediates the biosynthesis of macrophorins, isoprenoid epoxycyclohexenones containing cyclized drimane moieties. The first step of the pathway is the synthesis of 6-methylsalicylic acid (6-MSA) by the polyketide synthase macA. 6-MSA is then converted to m-cresol by the decarboxylase macB. The cytochrome P450 monooxygenase macC then catalyzes the oxidation of m-cresol to toluquinol. Epoxidation of toluquinol is then performed by the short chain dehydrogenase macD, with the help of macE, and a further prenylation by macG leads to 7-deacetoxyyanuthone A. The next step is the hydroxylation of C-22 of 7-deacetoxyyanuthone A by the cytochrome P450 monooxygenase macH to yield 22-deacetylyanuthone A. O-Mevalon transferase macI then attaches mevalon to the hydroxyl group of 22-deacetylyanuthone A to produce yanuthone E. The terpene cyclase macJ catalyzes the cyclization of 22-deacetylyanuthone A to macrophorin A. MacJ is also able to catalyze cyclization of yanuthone E and 7-deacetoxyyanuthone A to their corresponding macrophorins. The macJ products can be further modified by macH and macJ, as well as by the FAD-dependent monooxygenase macF, to produce additional macrophorins, including 4'-oxomacrophorin A, 4'-oxomacrophorin D and 4'-oxomacrophorin E. In Penicillium terrestre, this protein is O-Mevalon transferase macI.